A 197-amino-acid polypeptide reads, in one-letter code: Phospholipid hydroperoxide glutathione peroxidase (197 aa).

Ser-40 is subject to Phosphoserine. Residue Sec-73 is part of the active site. Sec-73 is a non-standard amino acid (selenocysteine).

The protein belongs to the glutathione peroxidase family. In terms of assembly, monomer. Has a tendency to form higher mass oligomers. Interacts with FUNDC1; this interaction promotes GPX4 recruitment into mitochondria through TOM/TIM complex where it is degraded by mitophagy. In terms of tissue distribution, expressed in testis. Also expressed in liver, lung, kidney and spinal cord.

The protein localises to the mitochondrion. The protein resides in the cytoplasm. The enzyme catalyses a hydroperoxy polyunsaturated fatty acid + 2 glutathione = a hydroxy polyunsaturated fatty acid + glutathione disulfide + H2O. It carries out the reaction 2 glutathione + H2O2 = glutathione disulfide + 2 H2O. It catalyses the reaction tert-butyl hydroperoxide + 2 glutathione = tert-butanol + glutathione disulfide + H2O. The catalysed reaction is cumene hydroperoxide + 2 glutathione = 2-phenylpropan-2-ol + glutathione disulfide + H2O. The enzyme catalyses (9S)-hydroperoxy-(10E,12Z)-octadecadienoate + 2 glutathione = (9S)-hydroxy-(10E,12Z)-octadecadienoate + glutathione disulfide + H2O. It carries out the reaction (13S)-hydroperoxy-(9Z,11E)-octadecadienoate + 2 glutathione = (13S)-hydroxy-(9Z,11E)-octadecadienoate + glutathione disulfide + H2O. It catalyses the reaction (5S)-hydroperoxy-(6E,8Z,11Z,14Z)-eicosatetraenoate + 2 glutathione = (5S)-hydroxy-(6E,8Z,11Z,14Z)-eicosatetraenoate + glutathione disulfide + H2O. The catalysed reaction is (12R)-hydroperoxy-(5Z,8Z,10E,14Z)-eicosatetraenoate + 2 glutathione = (12R)-hydroxy-(5Z,8Z,10E,14Z)-eicosatetraenoate + glutathione disulfide + H2O. The enzyme catalyses (12S)-hydroperoxy-(5Z,8Z,10E,14Z)-eicosatetraenoate + 2 glutathione = (12S)-hydroxy-(5Z,8Z,10E,14Z)-eicosatetraenoate + glutathione disulfide + H2O. It carries out the reaction (15S)-hydroperoxy-(5Z,8Z,11Z,13E)-eicosatetraenoate + 2 glutathione = (15S)-hydroxy-(5Z,8Z,11Z,13E)-eicosatetraenoate + glutathione disulfide + H2O. It catalyses the reaction (5S)-hydroperoxy-(6E,8Z,11Z,14Z,17Z)-eicosapentaenoate + 2 glutathione = (5S)-hydroxy-(6E,8Z,11Z,14Z,17Z)-eicosapentaenoate + glutathione disulfide + H2O. The catalysed reaction is (12S)-hydroperoxy-(5Z,8Z,10E,14Z,17Z)-eicosapentaenoate + 2 glutathione = (12S)-hydroxy-(5Z,8Z,10E,14Z,17Z)-eicosapentaenoate + glutathione disulfide + H2O. The enzyme catalyses (15S)-hydroperoxy-(5Z,8Z,11Z,13E,17Z)-eicosapentaenoate + 2 glutathione = (15S)-hydroxy-(5Z,8Z,11Z,13E,17Z)-eicosapentaenoate + glutathione disulfide + H2O. It carries out the reaction (15S)-hydroperoxy-(11Z,13E)-eicosadienoate + 2 glutathione = (15S)-hydroxy-(11Z,13E)-eicosadienoate + glutathione disulfide + H2O. It catalyses the reaction (17S)-hydroperoxy-(4Z,7Z,10Z,13Z,15E,19Z)-docosahexaenoate + 2 glutathione = (17S)-hydroxy-(4Z,7Z,10Z,13Z,15E,19Z)-docosahexaenoate + glutathione disulfide + H2O. The catalysed reaction is a hydroperoxy-1,2-diacyl-glycero-3-phosphocholine + 2 glutathione = a hydroxy-1,2-diacyl-glycero-3-phosphocholine + glutathione disulfide + H2O. Essential antioxidant peroxidase that directly reduces phospholipid hydroperoxide even if they are incorporated in membranes and lipoproteins. Can also reduce fatty acid hydroperoxide, cholesterol hydroperoxide and thymine hydroperoxide. Plays a key role in protecting cells from oxidative damage by preventing membrane lipid peroxidation. Required to prevent cells from ferroptosis, a non-apoptotic cell death resulting from an iron-dependent accumulation of lipid reactive oxygen species. The presence of selenocysteine (Sec) versus Cys at the active site is essential for life: it provides resistance to overoxidation and prevents cells against ferroptosis. The presence of Sec at the active site is also essential for the survival of a specific type of parvalbumin-positive interneurons, thereby preventing against fatal epileptic seizures. May be required to protect cells from the toxicity of ingested lipid hydroperoxides. Required for normal sperm development and male fertility. Essential for maturation and survival of photoreceptor cells. Plays a role in a primary T-cell response to viral and parasitic infection by protecting T-cells from ferroptosis and by supporting T-cell expansion. Plays a role of glutathione peroxidase in platelets in the arachidonic acid metabolism. Reduces hydroperoxy ester lipids formed by a 15-lipoxygenase that may play a role as down-regulator of the cellular 15-lipoxygenase pathway. Can also reduce small soluble hydroperoxides such as H2O2, cumene hydroperoxide and tert-butyl hydroperoxide. The protein is Phospholipid hydroperoxide glutathione peroxidase of Callithrix jacchus (White-tufted-ear marmoset).